Consider the following 457-residue polypeptide: Argininosuccinate lyase (457 aa).

Belongs to the lyase 1 family. Argininosuccinate lyase subfamily.

The protein resides in the cytoplasm. The catalysed reaction is 2-(N(omega)-L-arginino)succinate = fumarate + L-arginine. The protein operates within amino-acid biosynthesis; L-arginine biosynthesis; L-arginine from L-ornithine and carbamoyl phosphate: step 3/3. The polypeptide is Argininosuccinate lyase (Sodalis glossinidius (strain morsitans)).